Consider the following 125-residue polypeptide: MRHYEIVFIVHPDQSEQVPAMVERYKGMVLGQNGKIHRLEDWGRRQLAYPIQKIHKAHYVMMNIECGKETLEEIEHAFKFNDAVLRHLTIKMDRAVTEASPMMKEEKAKNLLAPQSDAAEPTAAA.

The tract at residues 101 to 125 (PMMKEEKAKNLLAPQSDAAEPTAAA) is disordered.

The protein belongs to the bacterial ribosomal protein bS6 family.

Binds together with bS18 to 16S ribosomal RNA. This Laribacter hongkongensis (strain HLHK9) protein is Small ribosomal subunit protein bS6.